The primary structure comprises 560 residues: Glucose-6-phosphate isomerase, cytosolic (560 aa).

Ala-2 bears the N-acetylalanine mark. Residue Glu-361 is the Proton donor of the active site. Residues His-392 and Lys-517 contribute to the active site.

It belongs to the GPI family. As to quaternary structure, homodimer.

Its subcellular location is the cytoplasm. The catalysed reaction is alpha-D-glucose 6-phosphate = beta-D-fructose 6-phosphate. Its pathway is carbohydrate degradation; glycolysis; D-glyceraldehyde 3-phosphate and glycerone phosphate from D-glucose: step 2/4. The sequence is that of Glucose-6-phosphate isomerase, cytosolic (PGIC) from Arabidopsis lyrata subsp. petraea (Northern rock-cress).